Here is a 912-residue protein sequence, read N- to C-terminus: Putative respiratory burst oxidase homolog protein J (912 aa).

Disordered stretches follow at residues 1-51 (MKNN…GGGI) and 73-112 (WRKS…RTTS). At 1 to 323 (MKNNKKVGTE…VVVTAELMYE (323 aa)) the chain is on the cytoplasmic side. Composition is skewed to polar residues over residues 29–44 (SVKQ…NPES) and 78–87 (NLGSPSTRKS). 2 EF-hand-like regions span residues 147–155 (AVDGRLPKD) and 181–193 (RQIK…DKEQ). The EF-hand domain maps to 205 to 240 (DLDCRLQIFFDMCDKDGDGKLTEEEVKEVIVLSASA). 5 residues coordinate Ca(2+): Asp218, Asp220, Asp222, Lys224, and Glu229. Residue Ser294 is modified to Phosphoserine. The helical transmembrane segment at 324–344 (HWKKIWVVTLWLAVNVVLFMW) threads the bilayer. The Extracellular portion of the chain corresponds to 345 to 363 (KYEEFTTSPLYNITGRCLC). Residues 364-384 (AAKGTAEILKLNMALILVPVL) traverse the membrane as a helical segment. One can recognise a Ferric oxidoreductase domain in the interval 366–523 (KGTAEILKLN…LLVIAYALLI (158 aa)). Over 385 to 410 (RRTLTFLRSTFLNHLIPFDDNINFHK) the chain is Cytoplasmic. Residues 411 to 431 (LIAVAIAVISLLHTALHMLCN) traverse the membrane as a helical segment. Topologically, residues 432–458 (YPRLSSCPYNFYSDYAGNLLGAKQPTY) are extracellular. A helical transmembrane segment spans residues 459 to 479 (LGLMLTPVSVTGVLMIIFMGI). The Cytoplasmic portion of the chain corresponds to 480–510 (SFTLAMHYFRRNIVKLPIPFNRLAGFNSFWY). Residues 511-531 (AHHLLVIAYALLIIHGYILII) form a helical membrane-spanning segment. The Extracellular portion of the chain corresponds to 532 to 697 (EKPWYQKTTW…PYGAPAQSYQ (166 aa)). The 134-residue stretch at 562–695 (EHNHRVHIIK…KGPYGAPAQS (134 aa)) folds into the FAD-binding FR-type domain. Residues 698–718 (KFDILLLIGLGIGATPFISIL) traverse the membrane as a helical segment. The Cytoplasmic portion of the chain corresponds to 719-912 (KDMLNNLKPG…TRFTFHKENF (194 aa)).

This sequence belongs to the RBOH (TC 5.B.1.3) family. In terms of assembly, monomer and homodimer.

It localises to the membrane. Its function is as follows. Calcium-dependent NADPH oxidase that generates superoxide. This is Putative respiratory burst oxidase homolog protein J (RBOHJ) from Arabidopsis thaliana (Mouse-ear cress).